The chain runs to 120 residues: Large ribosomal subunit protein uL18 (120 aa).

It belongs to the universal ribosomal protein uL18 family. In terms of assembly, part of the 50S ribosomal subunit; part of the 5S rRNA/L5/L18 subcomplex. In B.stearothermophilus only 2 proteins, L5 and L18 have been shown to be part of this subcomplex, unlike the case in E.coli and T.thermophilus where L25 (TL5) is also found. Post-translationally, the protein, when overexpressed in E.coli, contains a phosphoserine, which is required for the protein to bind to 5S rRNA. It has been suggested, based solely on amino acid conservation, that this occurs on Ser-57.

This is one of the proteins that bind and probably mediate the attachment of the 5S RNA into the large ribosomal subunit, where it forms part of the central protuberance. This Geobacillus stearothermophilus (Bacillus stearothermophilus) protein is Large ribosomal subunit protein uL18 (rplR).